An 84-amino-acid polypeptide reads, in one-letter code: Dolichol phosphate-mannose biosynthesis regulatory protein (84 aa).

Helical transmembrane passes span 11 to 31 (FGLV…VILL) and 49 to 69 (YAVL…GLFI).

It belongs to the DPM2 family. As to quaternary structure, component of the dolichol-phosphate mannose (DPM) synthase complex composed of DPM1, DPM2 and DPM3; in the complex interacts directly with DPM3. Component of the glycosylphosphatidylinositol-N-acetylglucosaminyltransferase (GPI-GnT) complex composed at least by PIGA, PIGC, PIGH, PIGP, PIGQ, PIGY and DPM2. Interacts with PIGA, PIGC and PIGQ.

The protein localises to the endoplasmic reticulum membrane. It functions in the pathway protein modification; protein glycosylation. Regulates the biosynthesis of dolichol phosphate-mannose. Regulatory subunit of the dolichol-phosphate mannose (DPM) synthase complex; essential for the ER localization and stable expression of DPM1. Part of the glycosylphosphatidylinositol-N-acetylglucosaminyltransferase (GPI-GnT) complex that catalyzes the transfer of N-acetylglucosamine from UDP-N-acetylglucosamine to phosphatidylinositol and participates in the first step of GPI biosynthesis. May act by regulating the GPI-GNT complex. The sequence is that of Dolichol phosphate-mannose biosynthesis regulatory protein from Rattus norvegicus (Rat).